Reading from the N-terminus, the 1097-residue chain is DNA-directed RNA polymerase subunit beta (1097 aa).

A disordered region spans residues 1072–1097 (QDVNPRRSTPSRPTYESLGVADYDED).

This sequence belongs to the RNA polymerase beta chain family. In cyanobacteria the RNAP catalytic core is composed of 2 alpha, 1 beta, 1 beta', 1 gamma and 1 omega subunit. When a sigma factor is associated with the core the holoenzyme is formed, which can initiate transcription.

The enzyme catalyses RNA(n) + a ribonucleoside 5'-triphosphate = RNA(n+1) + diphosphate. Functionally, DNA-dependent RNA polymerase catalyzes the transcription of DNA into RNA using the four ribonucleoside triphosphates as substrates. The polypeptide is DNA-directed RNA polymerase subunit beta (Synechococcus sp. (strain CC9605)).